The following is a 521-amino-acid chain: Glucomannan 4-beta-mannosyltransferase 1 (521 aa).

Residues 22–42 traverse the membrane as a helical segment; it reads VIVPLLRLAVAVCLTMSVLLF. D123 is a catalytic residue. Residues D182 and D184 each contribute to the substrate site. Residue D276 is part of the active site. A run of 4 helical transmembrane segments spans residues 355 to 375, 391 to 411, 471 to 491, and 495 to 515; these read IIAH…TIFV, IITL…FFWI, VTEL…LAFG, and FFIY…GYVG.

This sequence belongs to the glycosyltransferase 2 family. Plant cellulose synthase-like A subfamily.

It is found in the golgi apparatus membrane. It catalyses the reaction GDP-mannose + (glucomannan)n = GDP + (glucomannan)n+1.. In terms of biological role, possesses glucomannan synthase and mannan synthase activities in vitro. Mannan synthase consists of a 4-beta-mannosyltransferase activity on mannan using GDP-mannose. The beta-1,4-mannan product is the backbone for galactomannan synthesis by galactomannan galactosyltransferase. Galactomannan is a noncellulosic polysaccharides of plant cell wall. The polypeptide is Glucomannan 4-beta-mannosyltransferase 1 (Oryza sativa subsp. japonica (Rice)).